Reading from the N-terminus, the 704-residue chain is Metabotropic glutamate receptor-like protein K (704 aa).

The N-terminal stretch at 1–21 (MIKLILSIILIICFIINSIES) is a signal peptide. Topologically, residues 22–383 (FKMITLTTGP…SKVEFQRSIQ (362 aa)) are extracellular. Residues Asn66, Asn104, Asn256, Asn286, Asn308, Asn337, Asn343, and Asn368 are each glycosylated (N-linked (GlcNAc...) asparagine). A helical transmembrane segment spans residues 384-404 (IGFSIVSGLLIGFVILMMIGI). The Cytoplasmic segment spans residues 405–419 (VKYQDTPSIRSASPS). A helical membrane pass occupies residues 420-440 (FLNLTLLGGVIIFIGIIVWVA). The Extracellular portion of the chain corresponds to 441 to 455 (PISTHQCNARFWLVT). Residues 456 to 476 (IGFSTLIGSLVVKNIRIWLIF) form a helical membrane-spanning segment. Residues 477 to 492 (DNPELKIRTITNNQLY) are Cytoplasmic-facing. A helical membrane pass occupies residues 493-513 (PWVGLCLVINIVLMSIITTVG). The Extracellular portion of the chain corresponds to 514 to 541 (DLKAIEAQGIDSLGKFEYMTICKMNYTG). A glycan (N-linked (GlcNAc...) asparagine) is linked at Asn538. The chain crosses the membrane as a helical span at residues 542-562 (AATLYSILAYFGTLLLVGVFV). Over 563–578 (SWKIRIVHIEEFSECT) the chain is Cytoplasmic. Residues 579-599 (AIAKTLYSISFCLFVIVPLMI) traverse the membrane as a helical segment. The Extracellular portion of the chain corresponds to 600–608 (SPQDKQSET). The chain crosses the membrane as a helical span at residues 609–629 (IILCVTGIFITTGALLIFFLP). Residues 630–704 (KFWRIFGNEK…NESSLSNETK (75 aa)) lie on the Cytoplasmic side of the membrane. 2 disordered regions span residues 657–677 (ARAE…SKSS) and 685–704 (SGIE…NETK).

This sequence in the N-terminal section; belongs to the BMP lipoprotein family. The protein in the C-terminal section; belongs to the G-protein coupled receptor 3 family. GABA-B receptor subfamily.

The protein localises to the membrane. The chain is Metabotropic glutamate receptor-like protein K (grlK) from Dictyostelium discoideum (Social amoeba).